The following is a 191-amino-acid chain: Pyridoxal 5'-phosphate synthase subunit PdxT (191 aa).

46 to 48 (GES) serves as a coordination point for L-glutamine. Cys-78 functions as the Nucleophile in the catalytic mechanism. L-glutamine contacts are provided by residues Arg-105 and 134–135 (IR). Residues His-170 and Glu-172 each act as charge relay system in the active site.

The protein belongs to the glutaminase PdxT/SNO family. As to quaternary structure, in the presence of PdxS, forms a dodecamer of heterodimers. Only shows activity in the heterodimer.

The catalysed reaction is aldehydo-D-ribose 5-phosphate + D-glyceraldehyde 3-phosphate + L-glutamine = pyridoxal 5'-phosphate + L-glutamate + phosphate + 3 H2O + H(+). The enzyme catalyses L-glutamine + H2O = L-glutamate + NH4(+). It participates in cofactor biosynthesis; pyridoxal 5'-phosphate biosynthesis. Functionally, catalyzes the hydrolysis of glutamine to glutamate and ammonia as part of the biosynthesis of pyridoxal 5'-phosphate. The resulting ammonia molecule is channeled to the active site of PdxS. This chain is Pyridoxal 5'-phosphate synthase subunit PdxT, found in Carboxydothermus hydrogenoformans (strain ATCC BAA-161 / DSM 6008 / Z-2901).